Here is a 257-residue protein sequence, read N- to C-terminus: 5-keto-4-deoxy-D-glucarate aldolase (257 aa).

His51 (proton acceptor) is an active-site residue. Gln152 provides a ligand contact to substrate. Position 154 (Glu154) interacts with Mg(2+). The substrate site is built by Ser179 and Asp180. Asp180 contacts Mg(2+).

Belongs to the HpcH/HpaI aldolase family. KDGluc aldolase subfamily. As to quaternary structure, homohexamer; trimer of dimers. It depends on Mg(2+) as a cofactor.

It carries out the reaction 5-dehydro-4-deoxy-D-glucarate = 2-hydroxy-3-oxopropanoate + pyruvate. It catalyses the reaction 2-dehydro-3-deoxy-D-glucarate = 2-hydroxy-3-oxopropanoate + pyruvate. It functions in the pathway carbohydrate acid metabolism; galactarate degradation; D-glycerate from galactarate: step 2/3. Functionally, catalyzes the reversible retro-aldol cleavage of both 5-keto-4-deoxy-D-glucarate and 2-keto-3-deoxy-D-glucarate to pyruvate and tartronic semialdehyde. The sequence is that of 5-keto-4-deoxy-D-glucarate aldolase from Shigella boydii serotype 18 (strain CDC 3083-94 / BS512).